A 74-amino-acid polypeptide reads, in one-letter code: Neuropeptide-like protein 33 (74 aa).

Positions 1–21 (MISTSLLLVVLLFAILAIVDA) are cleaved as a signal peptide. The residue at position 72 (Tyr72) is a Tyrosine amide.

Belongs to the YARP (YGGW-amide related peptide) family. In terms of tissue distribution, expressed in hypoderm.

The protein resides in the secreted. In terms of biological role, may have antifungic activity against D.coniospora. The protein is Neuropeptide-like protein 33 (nlp-33) of Caenorhabditis elegans.